A 345-amino-acid chain; its full sequence is Probable S-adenosylmethionine carrier 2, chloroplastic (345 aa).

The transit peptide at 1 to 31 directs the protein to the chloroplast; it reads MTKALSGFCCSLSLSTLVRSSSSHMDSDIVS. Solcar repeat units lie at residues 76–148, 157–239, and 252–334; these read RVLY…TKQK, LSAV…LRIG, and ENAM…TKQI. 5 helical membrane passes run 82-102, 121-141, 156-176, 254-274, and 309-329; these read LITG…IDTI, YSGL…FFGV, NLSA…SSIV, AMIG…LDVI, and GMGP…GVLE.

Belongs to the mitochondrial carrier (TC 2.A.29) family. As to expression, expressed at low levels in seedlings, leaves, flowers, stems and roots.

It localises to the plastid. It is found in the chloroplast membrane. Probable S-adenosylmethionine (SAM) transporter able to catalyze both uniport and exchange reactions through membranes. In Arabidopsis thaliana (Mouse-ear cress), this protein is Probable S-adenosylmethionine carrier 2, chloroplastic (SAMC2).